Consider the following 76-residue polypeptide: Conotoxin TxMEKL-011 (76 aa).

An N-terminal signal peptide occupies residues Met1–Ala19. A propeptide spanning residues Leu20–Arg45 is cleaved from the precursor. Disulfide bonds link Cys51–Cys65, Cys58–Cys69, and Cys64–Cys73.

Belongs to the conotoxin O2 superfamily. In terms of tissue distribution, expressed by the venom duct.

The protein localises to the secreted. In Conus textile (Cloth-of-gold cone), this protein is Conotoxin TxMEKL-011.